The primary structure comprises 183 residues: ATP synthase subunit b, chloroplastic (183 aa).

The helical transmembrane segment at 27-49 (LATNLINLTVVVGVLIFFGKGVL) threads the bilayer.

The protein belongs to the ATPase B chain family. In terms of assembly, F-type ATPases have 2 components, F(1) - the catalytic core - and F(0) - the membrane proton channel. F(1) has five subunits: alpha(3), beta(3), gamma(1), delta(1), epsilon(1). F(0) has four main subunits: a(1), b(1), b'(1) and c(10-14). The alpha and beta chains form an alternating ring which encloses part of the gamma chain. F(1) is attached to F(0) by a central stalk formed by the gamma and epsilon chains, while a peripheral stalk is formed by the delta, b and b' chains.

The protein resides in the plastid. It localises to the chloroplast thylakoid membrane. Its function is as follows. F(1)F(0) ATP synthase produces ATP from ADP in the presence of a proton or sodium gradient. F-type ATPases consist of two structural domains, F(1) containing the extramembraneous catalytic core and F(0) containing the membrane proton channel, linked together by a central stalk and a peripheral stalk. During catalysis, ATP synthesis in the catalytic domain of F(1) is coupled via a rotary mechanism of the central stalk subunits to proton translocation. Functionally, component of the F(0) channel, it forms part of the peripheral stalk, linking F(1) to F(0). The protein is ATP synthase subunit b, chloroplastic of Lolium perenne (Perennial ryegrass).